Consider the following 604-residue polypeptide: Glucose oxidase (604 aa).

A signal peptide spans 1–18; that stretch reads MKSTIITSILFSVATVQA. FAD is bound by residues leucine 52, threonine 53, and glutamate 73. Asparagine 111 carries an N-linked (GlcNAc...) asparagine glycan. The FAD site is built by serine 125, asparagine 129, glycine 130, and serine 132. Cysteine 186 and cysteine 228 are oxidised to a cystine. Residue asparagine 213 is glycosylated (N-linked (GlcNAc...) asparagine). Residue valine 272 participates in FAD binding. N-linked (GlcNAc...) asparagine glycosylation is found at asparagine 278, asparagine 409, and asparagine 531. Histidine 537 functions as the Proton acceptor in the catalytic mechanism. Residues lysine 558 and valine 559 each contribute to the O2 site. Residues glycine 570 and methionine 582 each coordinate FAD.

Belongs to the GMC oxidoreductase family. In terms of assembly, homodimer. It depends on FAD as a cofactor.

The protein localises to the secreted. The protein resides in the cell wall. Its subcellular location is the cytoplasm. It localises to the extracellular space. It is found in the extracellular matrix. The catalysed reaction is beta-D-glucose + O2 = D-glucono-1,5-lactone + H2O2. Its function is as follows. Glucose oxidase catalyzes the oxidation of beta-D-glucose to D-glucono-delta-lactone and hydrogen peroxide in the presence of molecular oxygen. The enzyme also catalyzes the reaction with D-xylose but at a much lower rate. Shows any activities against D-fructose, D-galactose and D-arabinose. The enzyme is cytotoxic for a series of bacteria, yeasts and filamentous fungi and acts primarily via the liberation of H(2)O(2), which is a harmful oxidative stress-generating agent. The protein is Glucose oxidase of Penicillium chrysogenum (Penicillium notatum).